A 104-amino-acid chain; its full sequence is Large ribosomal subunit protein bL21 (104 aa).

The protein belongs to the bacterial ribosomal protein bL21 family. As to quaternary structure, part of the 50S ribosomal subunit. Contacts protein L20.

Its function is as follows. This protein binds to 23S rRNA in the presence of protein L20. This chain is Large ribosomal subunit protein bL21, found in Symbiobacterium thermophilum (strain DSM 24528 / JCM 14929 / IAM 14863 / T).